Reading from the N-terminus, the 157-residue chain is Transcription elongation factor GreA (157 aa).

Residues 12–74 (LKKLEEELEY…TLEAMLKNAK (63 aa)) are a coiled coil.

It belongs to the GreA/GreB family.

Necessary for efficient RNA polymerase transcription elongation past template-encoded arresting sites. The arresting sites in DNA have the property of trapping a certain fraction of elongating RNA polymerases that pass through, resulting in locked ternary complexes. Cleavage of the nascent transcript by cleavage factors such as GreA or GreB allows the resumption of elongation from the new 3'terminus. GreA releases sequences of 2 to 3 nucleotides. This is Transcription elongation factor GreA from Thermoanaerobacter pseudethanolicus (strain ATCC 33223 / 39E) (Clostridium thermohydrosulfuricum).